We begin with the raw amino-acid sequence, 255 residues long: 1-(5-phosphoribosyl)-5-[(5-phosphoribosylamino)methylideneamino] imidazole-4-carboxamide isomerase (255 aa).

Asp8 acts as the Proton acceptor in catalysis. Asp129 acts as the Proton donor in catalysis.

This sequence belongs to the HisA/HisF family.

Its subcellular location is the cytoplasm. The catalysed reaction is 1-(5-phospho-beta-D-ribosyl)-5-[(5-phospho-beta-D-ribosylamino)methylideneamino]imidazole-4-carboxamide = 5-[(5-phospho-1-deoxy-D-ribulos-1-ylimino)methylamino]-1-(5-phospho-beta-D-ribosyl)imidazole-4-carboxamide. Its pathway is amino-acid biosynthesis; L-histidine biosynthesis; L-histidine from 5-phospho-alpha-D-ribose 1-diphosphate: step 4/9. The sequence is that of 1-(5-phosphoribosyl)-5-[(5-phosphoribosylamino)methylideneamino] imidazole-4-carboxamide isomerase from Prochlorococcus marinus (strain MIT 9515).